The following is a 371-amino-acid chain: Beta-1,3-galactosyltransferase 4 (371 aa).

Residues 1–4 (MPLS) lie on the Cytoplasmic side of the membrane. Residues 5–25 (LFRRVLLAVLLLVIIWTLFGP) form a helical; Signal-anchor for type II membrane protein membrane-spanning segment. The Lumenal segment spans residues 26 to 371 (SGLGEELLSL…RCRFIAWFSS (346 aa)). N143 is a glycosylation site (N-linked (GlcNAc...) asparagine).

The protein belongs to the glycosyltransferase 31 family. In terms of tissue distribution, expressed in heart, brain, spleen, kidney, lung and testis.

It is found in the golgi apparatus membrane. It carries out the reaction a ganglioside GM2 (d18:1(4E)) + UDP-alpha-D-galactose = a ganglioside GM1 (d18:1(4E)) + UDP + H(+). The enzyme catalyses a ganglioside GM2 + UDP-alpha-D-galactose = a ganglioside GM1 + UDP + H(+). It catalyses the reaction a ganglioside GD2 (d18:1(4E)) + UDP-alpha-D-galactose = a ganglioside GD1b (d18:1(4E)) + UDP + H(+). The catalysed reaction is a ganglioside GA2 (d18:1(4E)) + UDP-alpha-D-galactose = a ganglioside GA1 (d18:1(4E)) + UDP + H(+). It participates in protein modification; protein glycosylation. Involved in GM1/GD1B/GA1 ganglioside biosynthesis. This chain is Beta-1,3-galactosyltransferase 4, found in Mus musculus (Mouse).